The primary structure comprises 235 residues: MAYARALLKLSGEALMGDQGYGIDPAIVQAIAKDVAGVVASGTQLAIVVGGGNIFRGLKGSAAGMDRATADYVGMLATVMNAITLQDGLERAGIPTRVQTAIEMQEVAEPYIRRRAIRHLEKGRVVVFGAGCGNPFFTTDTTAALRAAEISADVVFKATKVDGVYDKDPHKYADAVRYDTLTFQQVLSGELAVMDSTAIALCKDNNIPIVVFNLFEAGNIGRAVAGEPIGSRISN.

9–12 provides a ligand contact to ATP; sequence KLSG. An involved in allosteric activation by GTP region spans residues 17 to 22; that stretch reads GDQGYG. Glycine 51 is a UMP binding site. 2 residues coordinate ATP: glycine 52 and arginine 56. UMP-binding positions include aspartate 71 and 132–139; that span reads CGNPFFTT. ATP-binding residues include threonine 159, tyrosine 165, and aspartate 168.

The protein belongs to the UMP kinase family. Homohexamer.

Its subcellular location is the cytoplasm. It catalyses the reaction UMP + ATP = UDP + ADP. It participates in pyrimidine metabolism; CTP biosynthesis via de novo pathway; UDP from UMP (UMPK route): step 1/1. With respect to regulation, allosterically activated by GTP. Inhibited by UTP. Catalyzes the reversible phosphorylation of UMP to UDP. The polypeptide is Uridylate kinase (Synechococcus sp. (strain WH7803)).